A 312-amino-acid chain; its full sequence is Acetyl-coenzyme A carboxylase carboxyl transferase subunit alpha (312 aa).

The 251-residue stretch at 36 to 286 folds into the CoA carboxyltransferase C-terminal domain; that stretch reads NLEKEISKTY…ADYVKKSLNE (251 aa).

This sequence belongs to the AccA family. In terms of assembly, acetyl-CoA carboxylase is a heterohexamer composed of biotin carboxyl carrier protein (AccB), biotin carboxylase (AccC) and two subunits each of ACCase subunit alpha (AccA) and ACCase subunit beta (AccD).

The protein localises to the cytoplasm. It catalyses the reaction N(6)-carboxybiotinyl-L-lysyl-[protein] + acetyl-CoA = N(6)-biotinyl-L-lysyl-[protein] + malonyl-CoA. The protein operates within lipid metabolism; malonyl-CoA biosynthesis; malonyl-CoA from acetyl-CoA: step 1/1. Component of the acetyl coenzyme A carboxylase (ACC) complex. First, biotin carboxylase catalyzes the carboxylation of biotin on its carrier protein (BCCP) and then the CO(2) group is transferred by the carboxyltransferase to acetyl-CoA to form malonyl-CoA. This Campylobacter jejuni subsp. jejuni serotype O:23/36 (strain 81-176) protein is Acetyl-coenzyme A carboxylase carboxyl transferase subunit alpha.